The primary structure comprises 1551 residues: Serine/threonine-protein kinase MRCK gamma (1551 aa).

The region spanning 71–337 (FEILKVIGRG…LDDFRNHPFF (267 aa)) is the Protein kinase domain. Residues 77–85 (IGRGAFGEV) and K100 each bind ATP. D195 serves as the catalytic Proton acceptor. A phosphoserine; by autocatalysis mark is found at S216 and S228. T234 bears the Phosphothreonine; by autocatalysis mark. The region spanning 338-408 (EGVDWERLAS…TSGSHSPESS (71 aa)) is the AGC-kinase C-terminal domain. 2 coiled-coil regions span residues 406 to 678 (ESSS…SNWE) and 730 to 802 (KARR…RARG). Disordered regions lie at residues 467-486 (KASL…QDSD), 655-675 (ELAQ…ETES), 801-849 (RGPV…PEGR), and 863-886 (TANT…PRSF). Residues 655-674 (ELAQEQESKQRLEGERRETE) show a composition bias toward basic and acidic residues. The segment covering 835 to 849 (ATRHGGEPDLRPEGR) has biased composition (basic and acidic residues). The segment at 878 to 927 (SHTLRPRSFPSPTKCLRCTSLMLGLGRQGLGCDACGYFCHTTCAPQAPPC) adopts a Phorbol-ester/DAG-type zinc-finger fold. The region spanning 947 to 1066 (GTAYEGFLSV…WLQVLGELQR (120 aa)) is the PH domain. A CNH domain is found at 1092 to 1366 (LPHTLCAAIL…RPLNPEGSLF (275 aa)). The region spanning 1437-1450 (ISPPTNFNHLVHVG) is the CRIB domain. Residues 1442–1551 (NFNHLVHVGP…PLSPELESSP (110 aa)) form a disordered region. Positions 1457–1470 (GARDKSPAPEEKGR) are enriched in basic and acidic residues. S1482 carries the post-translational modification Phosphoserine. The segment covering 1511–1533 (TSLSSESVSCPQGSLSPATSLMQ) has biased composition (polar residues). A compositionally biased stretch (low complexity) spans 1540–1551 (SLPLSPELESSP).

The protein belongs to the protein kinase superfamily. AGC Ser/Thr protein kinase family. DMPK subfamily. As to quaternary structure, homodimer and homotetramer via the coiled coil regions. Interacts tightly with GTP-bound but not GDP-bound CDC42. Requires Mg(2+) as cofactor. In terms of tissue distribution, expressed in heart and skeletal muscle.

The protein resides in the cytoplasm. It carries out the reaction L-seryl-[protein] + ATP = O-phospho-L-seryl-[protein] + ADP + H(+). The catalysed reaction is L-threonyl-[protein] + ATP = O-phospho-L-threonyl-[protein] + ADP + H(+). With respect to regulation, maintained in an inactive, closed conformation by an interaction between the kinase domain and the negative autoregulatory C-terminal coiled-coil region. Agonist binding to the phorbol ester binding site disrupts this, releasing the kinase domain to allow N-terminus-mediated dimerization and kinase activation by transautophosphorylation. Its function is as follows. May act as a downstream effector of CDC42 in cytoskeletal reorganization. Contributes to the actomyosin contractility required for cell invasion, through the regulation of MYPT1 and thus MLC2 phosphorylation. The sequence is that of Serine/threonine-protein kinase MRCK gamma from Homo sapiens (Human).